Here is a 1359-residue protein sequence, read N- to C-terminus: MWHLRGRSSVTAAAAAALHKPVAHLRLLLAVSAWSVPAAASNVAAASTTTRGGPSPSAGVAPRAMPSSSSSPPSAAEGTTAAAGGFRLTEPSFLESLMPKKEIGVDRFLAAHPEYDGRGALIAIFDSGVDPAAAGLQTTSDGKPKILDVIDCTGSGDVDTSKVVKADDDGSIVGASGTHLTINPSWKNPSQEWHVGCKLVYELFTDTLTSRLKKERKKKWDEHNQEAISEALKQLNEFEKKHSKSDDAKQKMAREDLQSRLEYLRKQAEGYDDRGPVIDIVAWHDGDVWRVAVDTQGLEGNKNCGKLADFVPLTNYRLERKFGIFSKLDACSFVANIYDDGNLVSIVTDCSPHATHVAGIAAAFHPDEPLLNGVAPGAQLISCKIGDTRLGSMETGTGLVRALIAAVEHKCDLINMSYGEPTLLPDYGRFIDLASEVVDKHRIIFISSAGNNGPALNTVGAPGGTSSSIIGVGAYVSPAMAAGAHCVVQAPAEGMEYTWSSRGPTADGDLGVSISAPGGAVAPVPTWTLQSRMLMNGTSMSSPSACGGVALLVSAMKAEGIPLSPYTVRKAIENTAASISDVPEEKLTTGHGLLQVDRAFEYAQQAKELPLVSYRISINQVGKPTSKLRGIYLRGSNTCRQTSEWTVQLDPKFHEDASNMEQLVPFEECLQLHSTDSSVIKIPEYIMVTNNGRTFNIVVNPVNISSGLHYYEVYGIDCKAPWRGPIFRVPITVIKPIALSGEPPALTLSNLSFKSGHIERRFINVPIGASWVEVTMRTSAFDTPRRFFLDTVQICPLKRPIKWEAVVTFSSPSLKNFSFPVEGGLTLELSIAQFWSSGIASHEPTCVDFEIVFHGISVDQKIIGLDGSEAPVRVVARSLLASERLVPVATLNKVKTPYRPVESNLCSLPPSRDRLPSGKQIIALTLTYKFKLEDGAEIKPRVPLLNNRIYDNKFESQYYRISDSNKCVYSSGDVYPNYVKLSKGEYTLQLYIRHDNVQLLEKLKQLVLFIERKLEKKDFIQLSFYSEPDGPTVGNGTFKSSILVPGEPEAFYVGPPSREKLPKNVLPGSVLVGSITYGAVSSFSKKDDQNQHAPASYSISYLIPPSKVDNDKEKGVSSGRKSISERLDDEVRDTKIKFLSGFNQETEDDKSSWTALVASLKPEYPKYTPLLAKILECIVQKATSDDKFSHQKEIIAAADEVVDSIDKEDLAKSLSLKPDPEDEEAQKNKKKMEETRDQLADALYQKGLALAEIESLKTDESTEASAKDVFEENYKELIKWVDAKTTKYGSLTVLRERRCGRLGTALKVLNDMIQDDSEQPKKRLYDLKIQLIEEIGWVHVSAYEKQWMHVRFPPSLPPF.

Residues 45–81 (AASTTTRGGPSPSAGVAPRAMPSSSSSPPSAAEGTTA) form a disordered region. Low complexity predominate over residues 64–81 (AMPSSSSSPPSAAEGTTA). Residues 102–600 (EIGVDRFLAA…HGLLQVDRAF (499 aa)) form the Peptidase S8 domain. Active-site charge relay system residues include Asp126, His353, and Ser539.

It belongs to the peptidase S8 family.

The catalysed reaction is Release of an N-terminal tripeptide from a polypeptide.. Its function is as follows. Serine protease that may function in the proteasome pathway. In Oryza sativa subsp. japonica (Rice), this protein is Tripeptidyl-peptidase 2 (TPP2).